A 469-amino-acid polypeptide reads, in one-letter code: A-type ATP synthase subunit B (469 aa).

The protein belongs to the ATPase alpha/beta chains family. Has multiple subunits with at least A(3), B(3), C, D, E, F, H, I and proteolipid K(x).

Its subcellular location is the cell membrane. Its function is as follows. Component of the A-type ATP synthase that produces ATP from ADP in the presence of a proton gradient across the membrane. The B chain is a regulatory subunit. The polypeptide is A-type ATP synthase subunit B (Staphylothermus marinus (strain ATCC 43588 / DSM 3639 / JCM 9404 / F1)).